The following is a 1052-amino-acid chain: Eukaryotic translation initiation factor 3 subunit A (1052 aa).

The stretch at leucine 92 to alanine 121 forms a coiled coil. A PCI domain is found at methionine 339–phenylalanine 523. A coiled-coil region spans residues glutamate 580–threonine 906. Composition is skewed to basic and acidic residues over residues alanine 617–arginine 632 and lysine 794–arginine 901. 2 disordered regions span residues alanine 617 to glutamine 646 and lysine 794 to glutamine 1052. Composition is skewed to low complexity over residues arginine 905–arginine 927 and lysine 948–glutamate 964. Over residues glycine 1013–serine 1028 the composition is skewed to polar residues.

The protein belongs to the eIF-3 subunit A family. As to quaternary structure, component of the eukaryotic translation initiation factor 3 (eIF-3) complex.

The protein resides in the cytoplasm. Its function is as follows. RNA-binding component of the eukaryotic translation initiation factor 3 (eIF-3) complex, which is involved in protein synthesis of a specialized repertoire of mRNAs and, together with other initiation factors, stimulates binding of mRNA and methionyl-tRNAi to the 40S ribosome. The eIF-3 complex specifically targets and initiates translation of a subset of mRNAs involved in cell proliferation. This Aspergillus niger (strain ATCC MYA-4892 / CBS 513.88 / FGSC A1513) protein is Eukaryotic translation initiation factor 3 subunit A (tif32).